Consider the following 291-residue polypeptide: MRLRHIEVFHAIYTTGSITNAAKALHVSQPSVSKVLSHAEMQLGFKLFERVKGRLIPTEEASMLFNEVDKIYQQMRSIKNTAENIKKAEFGNINLSVTPALGFDALPCAIAKYHHAYPKVNFNVQTIHNNEALQALLEHKCDLAVVFSPSAMPGVKAIKIAQSELVAVFPKRLFPSIPAQLTFQELEGAEFIDISDSGPLGHLLWKRMLEENIVLDSTIKVQTYFIAARLVAQGVGVCIVDKYTAMGNLSDDIAIASFSPPLFFNVSALHLENKVLSHVLDAFLNELSNCI.

Positions 1–58 (MRLRHIEVFHAIYTTGSITNAAKALHVSQPSVSKVLSHAEMQLGFKLFERVKGRLIPT) constitute an HTH lysR-type domain. The H-T-H motif DNA-binding region spans 18-37 (ITNAAKALHVSQPSVSKVLS).

Belongs to the LysR transcriptional regulatory family.

In terms of biological role, transcriptional regulator that positively regulates the expression of the D-Glu gene cluster (DGC). The cluster includes dgcN and dgcA, which are involved in a deamination-independent D-glutamate degradation pathway, dgcR itself, dgcT, dgcP and dgcH. Acts by binding the consensus sequence upstream of dgcR, dgcT, dgcP and dgcH. The sequence is that of HTH-type transcriptional regulator DgcR from Pseudoalteromonas sp.